We begin with the raw amino-acid sequence, 550 residues long: Glucose-6-phosphate isomerase 1 (550 aa).

E355 (proton donor) is an active-site residue. Active-site residues include H386 and K512.

It belongs to the GPI family.

The protein resides in the cytoplasm. It carries out the reaction alpha-D-glucose 6-phosphate = beta-D-fructose 6-phosphate. It participates in carbohydrate biosynthesis; gluconeogenesis. Its pathway is carbohydrate degradation; glycolysis; D-glyceraldehyde 3-phosphate and glycerone phosphate from D-glucose: step 2/4. Catalyzes the reversible isomerization of glucose-6-phosphate to fructose-6-phosphate. This chain is Glucose-6-phosphate isomerase 1, found in Rhodococcus jostii (strain RHA1).